Here is a 106-residue protein sequence, read N- to C-terminus: UPF0145 protein APL_0465 (106 aa).

It belongs to the UPF0145 family.

The sequence is that of UPF0145 protein APL_0465 from Actinobacillus pleuropneumoniae serotype 5b (strain L20).